Here is a 436-residue protein sequence, read N- to C-terminus: Flagellum-specific ATP synthase (436 aa).

165–172 (SGSGVGKS) lines the ATP pocket.

The protein belongs to the ATPase alpha/beta chains family.

Its subcellular location is the cytoplasm. The enzyme catalyses ATP + H2O + 4 H(+)(in) = ADP + phosphate + 5 H(+)(out). In terms of biological role, probable catalytic subunit of a protein translocase for flagellum-specific export, or a proton translocase involved in local circuits at the flagellum. May be involved in a specialized protein export pathway that proceeds without signal peptide cleavage. The protein is Flagellum-specific ATP synthase (fliI) of Borreliella burgdorferi (strain ATCC 35210 / DSM 4680 / CIP 102532 / B31) (Borrelia burgdorferi).